A 341-amino-acid polypeptide reads, in one-letter code: tRNA N6-adenosine threonylcarbamoyltransferase (341 aa).

Fe cation-binding residues include H111 and H115. Residues 134-138, D167, G180, and N276 contribute to the substrate site; that span reads LVSGG. D304 serves as a coordination point for Fe cation.

This sequence belongs to the KAE1 / TsaD family. The cofactor is Fe(2+).

It localises to the cytoplasm. The catalysed reaction is L-threonylcarbamoyladenylate + adenosine(37) in tRNA = N(6)-L-threonylcarbamoyladenosine(37) in tRNA + AMP + H(+). In terms of biological role, required for the formation of a threonylcarbamoyl group on adenosine at position 37 (t(6)A37) in tRNAs that read codons beginning with adenine. Is involved in the transfer of the threonylcarbamoyl moiety of threonylcarbamoyl-AMP (TC-AMP) to the N6 group of A37, together with TsaE and TsaB. TsaD likely plays a direct catalytic role in this reaction. The sequence is that of tRNA N6-adenosine threonylcarbamoyltransferase from Pseudomonas fluorescens (strain ATCC BAA-477 / NRRL B-23932 / Pf-5).